A 226-amino-acid polypeptide reads, in one-letter code: 2,3-bisphosphoglycerate-dependent phosphoglycerate mutase (226 aa).

Residues 8–15, 21–22, arginine 58, 112–115, lysine 123, 139–140, and 183–184 contribute to the substrate site; these read RHGQSQWN, TG, ERMY, RR, and GN. Residue histidine 9 is the Tele-phosphohistidine intermediate of the active site. Catalysis depends on glutamate 112, which acts as the Proton donor/acceptor.

This sequence belongs to the phosphoglycerate mutase family. BPG-dependent PGAM subfamily.

It carries out the reaction (2R)-2-phosphoglycerate = (2R)-3-phosphoglycerate. The protein operates within carbohydrate degradation; glycolysis; pyruvate from D-glyceraldehyde 3-phosphate: step 3/5. Its function is as follows. Catalyzes the interconversion of 2-phosphoglycerate and 3-phosphoglycerate. In Protochlamydia amoebophila (strain UWE25), this protein is 2,3-bisphosphoglycerate-dependent phosphoglycerate mutase.